The primary structure comprises 342 residues: N-acetyl-gamma-glutamyl-phosphate reductase (342 aa).

Cysteine 149 is an active-site residue.

It belongs to the NAGSA dehydrogenase family. Type 1 subfamily.

It localises to the cytoplasm. The enzyme catalyses N-acetyl-L-glutamate 5-semialdehyde + phosphate + NADP(+) = N-acetyl-L-glutamyl 5-phosphate + NADPH + H(+). Its pathway is amino-acid biosynthesis; L-arginine biosynthesis; N(2)-acetyl-L-ornithine from L-glutamate: step 3/4. Catalyzes the NADPH-dependent reduction of N-acetyl-5-glutamyl phosphate to yield N-acetyl-L-glutamate 5-semialdehyde. This Cereibacter sphaeroides (strain KD131 / KCTC 12085) (Rhodobacter sphaeroides) protein is N-acetyl-gamma-glutamyl-phosphate reductase.